The primary structure comprises 319 residues: Meiotic drive suppressor wtf16 (319 aa).

Disordered stretches follow at residues 1-22 and 35-68; these read MKNNYTSLKSPIDEGDESKTGH and DSEEEGALPPYSDHARVSNSPNTHRENNPSRSTD. 6 consecutive transmembrane segments (helical) span residues 73 to 93, 110 to 130, 153 to 173, 187 to 207, 215 to 235, and 241 to 261; these read FLIKLLISFTPIYVLNVLAIC, WTLFGFWCLVCTLALIFLTYF, VVIIWLLWVVICFVLFGCIKF, CSISAALLLFLLYVRLPFWTL, FQVLGVQSCVVIVTKGLMYLF, and ATGYEIEATSLFVIGNFFFFY.

The protein belongs to the WTF family. Homomer. Interacts with other proteins that exhibit high sequence similarity.

The protein resides in the spore membrane. It is found in the vacuole membrane. In terms of biological role, acts as a suppressor component of the dual wtf meiotic drive system, and can suppress but not confer meiotic drive by compatible poisons. Wtf meiotic drive systems promote unequal transmission of alleles from the parental zygote to progeny spores by encoding a poison and an antidote from the same locus; the poison is trans-acting and forms toxic aggregates in all spores within an ascus, wherease the antidote is spore-specific and targets aggregates for degradation by the vacuole. Meiotic drive by wtf systems therefore lead to poisoning of all progeny that do not inherit the dual poison/antidote allele, or express a compatible antidote. The chain is Meiotic drive suppressor wtf16 from Schizosaccharomyces pombe (strain 972 / ATCC 24843) (Fission yeast).